The primary structure comprises 148 residues: uncharacterized protein (148 aa).

A helical membrane pass occupies residues 22-40 (YFLSLTVVISIIHLFTTCV). Residues 43-141 (HNHSTHFPYL…YYPISRHYLH (99 aa)) form a histidine-rich region.

The protein resides in the host membrane. This is an uncharacterized protein from African swine fever virus (strain Badajoz 1971 Vero-adapted) (Ba71V).